A 151-amino-acid polypeptide reads, in one-letter code: Proteolipid protein 2 (151 aa).

Positions 19–137 constitute an MARVEL domain; sequence FSRTKKGILL…DAYITFPLKQ (119 aa). Helical transmembrane passes span 25–45, 48–68, 85–105, and 112–132; these read GILLFAEIILCLVILICFSAS, AYSSLSVIEMIFAAVLFVFYM, FFRSLIAAILYLITSIVVLVE, and IVAGVLGLLATLLFGYDAYIT.

The protein localises to the membrane. In terms of biological role, may play a role in cell differentiation in the intestinal epithelium. This is Proteolipid protein 2 (Plp2) from Rattus norvegicus (Rat).